The following is a 132-amino-acid chain: Small ribosomal subunit protein uS8c (132 aa).

This sequence belongs to the universal ribosomal protein uS8 family. As to quaternary structure, part of the 30S ribosomal subunit.

The protein resides in the plastid. Its subcellular location is the chloroplast. In terms of biological role, one of the primary rRNA binding proteins, it binds directly to 16S rRNA central domain where it helps coordinate assembly of the platform of the 30S subunit. The protein is Small ribosomal subunit protein uS8c (rps8) of Physcomitrium patens (Spreading-leaved earth moss).